The sequence spans 305 residues: Glycine--tRNA ligase alpha subunit (305 aa).

The protein belongs to the class-II aminoacyl-tRNA synthetase family. As to quaternary structure, tetramer of two alpha and two beta subunits.

It is found in the cytoplasm. The catalysed reaction is tRNA(Gly) + glycine + ATP = glycyl-tRNA(Gly) + AMP + diphosphate. This Streptococcus mutans serotype c (strain ATCC 700610 / UA159) protein is Glycine--tRNA ligase alpha subunit.